The sequence spans 241 residues: Zinc finger CCHC domain-containing protein 24 (241 aa).

Phosphoserine is present on residues Ser-65 and Ser-93. A CCHC-type zinc finger spans residues 132 to 149; that stretch reads YLCHLCFNKGHYIKDCPQ.

The polypeptide is Zinc finger CCHC domain-containing protein 24 (ZCCHC24) (Homo sapiens (Human)).